The primary structure comprises 395 residues: Elongation factor Tu (395 aa).

Residues 10 to 205 (KPHVNIGTIG…VDNWIPIPPR (196 aa)) form the tr-type G domain. Positions 19-26 (GHVDHGKT) are G1. GTP is bound at residue 19–26 (GHVDHGKT). Threonine 26 is a binding site for Mg(2+). The tract at residues 60 to 64 (GITIN) is G2. The G3 stretch occupies residues 81–84 (DCPG). GTP is bound by residues 81-85 (DCPGH) and 136-139 (NKVD). The interval 136–139 (NKVD) is G4. The segment at 174 to 176 (SAL) is G5.

It belongs to the TRAFAC class translation factor GTPase superfamily. Classic translation factor GTPase family. EF-Tu/EF-1A subfamily. In terms of assembly, monomer.

The protein localises to the cytoplasm. The catalysed reaction is GTP + H2O = GDP + phosphate + H(+). GTP hydrolase that promotes the GTP-dependent binding of aminoacyl-tRNA to the A-site of ribosomes during protein biosynthesis. This chain is Elongation factor Tu, found in Hymenobacter ocellatus (Parahymenobacter ocellatus).